We begin with the raw amino-acid sequence, 284 residues long: uncharacterized protein (284 aa).

10 N-linked (GlcNAc...) asparagine; by host glycosylation sites follow: Asn79, Asn102, Asn111, Asn147, Asn162, Asn174, Asn196, Asn211, Asn228, and Asn234. A helical membrane pass occupies residues 239–259 (AFTYGSWGVAMLLFAAVMVLV).

The protein belongs to the RL11 family.

It localises to the membrane. This is an uncharacterized protein from Human cytomegalovirus (strain AD169) (HHV-5).